The sequence spans 249 residues: Coproheme decarboxylase (249 aa).

Fe-coproporphyrin III-binding positions include arginine 131, 145–149 (YPMDK), histidine 172, and glutamine 185. Residue tyrosine 145 is part of the active site.

The protein belongs to the ChdC family. Type 1 subfamily. It depends on Fe-coproporphyrin III as a cofactor.

The catalysed reaction is Fe-coproporphyrin III + 2 H2O2 + 2 H(+) = heme b + 2 CO2 + 4 H2O. It carries out the reaction Fe-coproporphyrin III + H2O2 + H(+) = harderoheme III + CO2 + 2 H2O. The enzyme catalyses harderoheme III + H2O2 + H(+) = heme b + CO2 + 2 H2O. Its pathway is porphyrin-containing compound metabolism; protoheme biosynthesis. Involved in coproporphyrin-dependent heme b biosynthesis. Catalyzes the decarboxylation of Fe-coproporphyrin III (coproheme) to heme b (protoheme IX), the last step of the pathway. The reaction occurs in a stepwise manner with a three-propionate intermediate. The protein is Coproheme decarboxylase of Staphylococcus epidermidis (strain ATCC 12228 / FDA PCI 1200).